The primary structure comprises 208 residues: Uracil phosphoribosyltransferase (208 aa).

5-phospho-alpha-D-ribose 1-diphosphate-binding positions include Arg77, Arg102, and 128-136 (DPMLATGGT). Residues Ile191 and 196 to 198 (GDI) each bind uracil. A 5-phospho-alpha-D-ribose 1-diphosphate-binding site is contributed by Asp197.

It belongs to the UPRTase family. It depends on Mg(2+) as a cofactor.

It carries out the reaction UMP + diphosphate = 5-phospho-alpha-D-ribose 1-diphosphate + uracil. It functions in the pathway pyrimidine metabolism; UMP biosynthesis via salvage pathway; UMP from uracil: step 1/1. Its activity is regulated as follows. Allosterically activated by GTP. Its function is as follows. Catalyzes the conversion of uracil and 5-phospho-alpha-D-ribose 1-diphosphate (PRPP) to UMP and diphosphate. This is Uracil phosphoribosyltransferase from Aquifex aeolicus (strain VF5).